The following is a 675-amino-acid chain: Collagen alpha-3(IX) chain (675 aa).

The first 21 residues, 1 to 21, serve as a signal peptide directing secretion; that stretch reads MTVFPTLGLLFLCQLLATTSA. Disordered regions lie at residues 22 to 517 and 542 to 660; these read QRVG…KEAS and KPLS…ICDT. The interval 25–515 is triple-helical region 3 (COL3); the sequence is GPQGPPGPRG…TGKPGPPGKE (491 aa). Composition is skewed to pro residues over residues 27–38 and 51–60; these read QGPPGPRGPPGP and SGLPGPPGPK. The span at 62-87 shows a compositional bias: low complexity; that stretch reads APGKPGAAGEAGLPGLPGVDGLTGTD. Over residues 105 to 125 the composition is skewed to pro residues; the sequence is AGPPGPAGKGLPGPPGPPGPS. A compositionally biased stretch (gly residues) spans 126 to 135; that stretch reads GLPGGNGFRG. Pro residues-rich tracts occupy residues 136–155 and 173–184; these read PPGP…PGPP and LCPPGPPGPPGM. Residues 218 to 233 show a composition bias toward low complexity; that stretch reads PGSVGLQGPRGLRGLP. The short motif at 242 to 244 is the Cell attachment site element; it reads RGD. Over residues 301–317 the composition is skewed to basic and acidic residues; sequence KDGRDGAPGLDGEKGDA. Low complexity predominate over residues 361-374; the sequence is EPGIPGDVGIPGDR. Asn479 carries an N-linked (GlcNAc...) asparagine glycan. The span at 481–508 shows a compositional bias: low complexity; that stretch reads TAGAPGIPGHPGPMGHQGEQGVPGITGK. A nonhelical region 3 (NC3) region spans residues 516-546; that stretch reads ASEQHIRELCGEMINDQIAQLAANLRKPLSP. Residues 547–626 form a triple-helical region 2 (COL2) region; the sequence is GMTGRPGPAG…QGLPGVPGIS (80 aa). Residues 569–582 show a composition bias toward low complexity; it reads HPGARGPPGYRGPT. The Cell attachment site motif lies at 591–593; sequence RGD. Low complexity predominate over residues 613–624; it reads DQGPQGLPGVPG. A nonhelical region 2 (NC2) region spans residues 627-631; the sequence is KNGRD. Residues 632–658 are triple-helical region 1 (COL1); the sequence is GAQGEPGLPGDPGTPGAVGAQGTPGIC. The segment at 659 to 675 is nonhelical region 1 (NC1); it reads DTSACMGAVGASTSKKS.

This sequence belongs to the fibril-associated collagens with interrupted helices (FACIT) family. Trimers composed of three different chains: alpha 1(IX), alpha 2(IX), and alpha 3(IX). In terms of processing, prolines at the third position of the tripeptide repeating unit (G-X-Y) are hydroxylated in some or all of the chains.

The protein localises to the secreted. It is found in the extracellular space. It localises to the extracellular matrix. Functionally, collagen type IX is a minor cartilage non-fibrillar collagen. It is associated with type II collagen fibrils. The polypeptide is Collagen alpha-3(IX) chain (COL9A3) (Gallus gallus (Chicken)).